Consider the following 394-residue polypeptide: Dual-specificity RNA methyltransferase RlmN (394 aa).

The active-site Proton acceptor is the glutamate 116. Residues 122-365 form the Radical SAM core domain; it reads EEDRGTLCVS…SPIRTPRGED (244 aa). An intrachain disulfide couples cysteine 129 to cysteine 370. Positions 136, 140, and 143 each coordinate [4Fe-4S] cluster. Residues 196-197, serine 228, 250-252, and asparagine 327 contribute to the S-adenosyl-L-methionine site; these read GE and SFH. Catalysis depends on cysteine 370, which acts as the S-methylcysteine intermediate.

It belongs to the radical SAM superfamily. RlmN family. [4Fe-4S] cluster serves as cofactor.

The protein localises to the cytoplasm. The enzyme catalyses adenosine(2503) in 23S rRNA + 2 reduced [2Fe-2S]-[ferredoxin] + 2 S-adenosyl-L-methionine = 2-methyladenosine(2503) in 23S rRNA + 5'-deoxyadenosine + L-methionine + 2 oxidized [2Fe-2S]-[ferredoxin] + S-adenosyl-L-homocysteine. It catalyses the reaction adenosine(37) in tRNA + 2 reduced [2Fe-2S]-[ferredoxin] + 2 S-adenosyl-L-methionine = 2-methyladenosine(37) in tRNA + 5'-deoxyadenosine + L-methionine + 2 oxidized [2Fe-2S]-[ferredoxin] + S-adenosyl-L-homocysteine. Specifically methylates position 2 of adenine 2503 in 23S rRNA and position 2 of adenine 37 in tRNAs. m2A2503 modification seems to play a crucial role in the proofreading step occurring at the peptidyl transferase center and thus would serve to optimize ribosomal fidelity. The sequence is that of Dual-specificity RNA methyltransferase RlmN from Dinoroseobacter shibae (strain DSM 16493 / NCIMB 14021 / DFL 12).